Reading from the N-terminus, the 108-residue chain is DNA-binding protein HBbu (108 aa).

Belongs to the bacterial histone-like protein family.

In terms of biological role, histone-like DNA-binding protein which is capable of wrapping DNA to stabilize it, and thus to prevent its denaturation under extreme environmental conditions. This Borrelia andersonii (Borreliella andersonii) protein is DNA-binding protein HBbu (hbb).